The chain runs to 239 residues: Ribonuclease 3 (239 aa).

The region spanning 12 to 137 is the RNase III domain; it reads RAKLEGLIGH…LIAAIYLDGG (126 aa). Glu-50 contributes to the Mg(2+) binding site. The active site involves Asp-54. The Mg(2+) site is built by Asp-123 and Glu-126. The active site involves Glu-126. One can recognise a DRBM domain in the interval 162-231; that stretch reads DAKTELQEWS…ATKMLEREGI (70 aa).

The protein belongs to the ribonuclease III family. As to quaternary structure, homodimer. Mg(2+) is required as a cofactor.

It is found in the cytoplasm. It carries out the reaction Endonucleolytic cleavage to 5'-phosphomonoester.. Functionally, digests double-stranded RNA. Involved in the processing of primary rRNA transcript to yield the immediate precursors to the large and small rRNAs (23S and 16S). Processes some mRNAs, and tRNAs when they are encoded in the rRNA operon. Processes pre-crRNA and tracrRNA of type II CRISPR loci if present in the organism. This chain is Ribonuclease 3, found in Rhizobium leguminosarum bv. trifolii (strain WSM2304).